We begin with the raw amino-acid sequence, 660 residues long: Replication restart protein PriA (660 aa).

The region spanning 145–313 is the Helicase ATP-binding domain; that stretch reads IIGSEKTNVF…KNNQIKKIIM (169 aa). Residue 158–165 coordinates ATP; sequence GIPGSGKT. The DEAH box motif lies at 256-259; it reads DEEH. Residues Cys-370, Cys-373, Cys-379, Cys-382, Cys-397, Cys-400, Cys-410, and Cys-413 each coordinate Zn(2+). Residues 405–557 enclose the Helicase C-terminal domain; the sequence is KTASHCPQCE…QFYEEELDIR (153 aa).

This sequence belongs to the helicase family. PriA subfamily. As to quaternary structure, component of the replication restart primosome. Zn(2+) is required as a cofactor.

The catalysed reaction is Couples ATP hydrolysis with the unwinding of duplex DNA by translocating in the 3'-5' direction.. It carries out the reaction ATP + H2O = ADP + phosphate + H(+). Functionally, initiates the restart of stalled replication forks, which reloads the replicative helicase on sites other than the origin of replication. Recognizes and binds to abandoned replication forks and remodels them to uncover a helicase loading site. Promotes assembly of the primosome at these replication forks. The protein is Replication restart protein PriA of Borreliella burgdorferi (strain ATCC 35210 / DSM 4680 / CIP 102532 / B31) (Borrelia burgdorferi).